We begin with the raw amino-acid sequence, 531 residues long: MPTDCISYQKSGYFSKLIVDYLDKKPELKELYNYFPSIENFKHQIEEKNHNFKNNDKRKILVDALKKQYTNFEISELTQKNIVLLENEKTFTITTGHQLNLFTGPLYFLYKIVSTINLCKELKRNYPEYNFVPIYWMATEDHDFEEINHFNFKGKKLSWNTASKGAVGRLSTKSLTNFFTVFKAELGLSNNAEYIKKLFSDSYLQHSNLADATRFLANKLFGKYGLVILDGDAAALKKQFIPYIKDELLYQNSNKKVLESIAKLKDYSIQVNPREINLFYIEANLRERIIYENGNYKVNNTFISFSETEILKLVDANSEKFSPNVILRPLYQEVILPNLAYIGGGGEIAYWLELKAMFDFHKVTFPILLVRNSAVLINEKQEKNRQKLNITWQELFLKQQVLIDAKTKEYSEIKIDFSEQKAHLKKQFEALHQIALKTDKSFSGAVKAQEKKQTKGLDNLEKRLLKAEKKMHSEKLKKIIELQNNLFPNESLQERKSNFSEIYVEIGEELINKISDQLHPLAATFSIIKHA.

Positions 447–481 (KAQEKKQTKGLDNLEKRLLKAEKKMHSEKLKKIIE) form a coiled coil.

This sequence belongs to the BshC family.

The polypeptide is Putative cysteine ligase BshC (Flavobacterium psychrophilum (strain ATCC 49511 / DSM 21280 / CIP 103535 / JIP02/86)).